The chain runs to 117 residues: Large ribosomal subunit protein bL19 (117 aa).

The protein belongs to the bacterial ribosomal protein bL19 family.

Its function is as follows. This protein is located at the 30S-50S ribosomal subunit interface and may play a role in the structure and function of the aminoacyl-tRNA binding site. This is Large ribosomal subunit protein bL19 from Rhodopirellula baltica (strain DSM 10527 / NCIMB 13988 / SH1).